A 591-amino-acid polypeptide reads, in one-letter code: L-fucose isomerase (591 aa).

Active-site proton acceptor residues include Glu337 and Asp361. Mn(2+) is bound by residues Glu337, Asp361, and His528.

The protein belongs to the L-fucose isomerase family. In terms of assembly, homohexamer. The cofactor is Mn(2+).

The protein resides in the cytoplasm. The catalysed reaction is L-fucose = L-fuculose. It participates in carbohydrate degradation; L-fucose degradation; L-lactaldehyde and glycerone phosphate from L-fucose: step 1/3. In terms of biological role, converts the aldose L-fucose into the corresponding ketose L-fuculose. In Klebsiella pneumoniae subsp. pneumoniae (strain ATCC 700721 / MGH 78578), this protein is L-fucose isomerase.